The sequence spans 211 residues: Transcription factor bHLH150 (211 aa).

Over residues 1–15 (MSSEQGNGSNPSTSP) the composition is skewed to polar residues. Residues 1 to 23 (MSSEQGNGSNPSTSPEVEGTKTI) are disordered. The bHLH domain occupies 135–184 (AIRGSGGSGRRRKLSAVGNRVRVLGGLVPGCRRTALPELLDETADYIAAL).

Homodimer. Interacts with PRE3 and ASK7. Post-translationally, phosphorylated by ASK7.

It is found in the nucleus. Functionally, atypical bHLH transcription factor probably unable to bind DNA. Negatively regulates brassinosteroid signaling. The protein is Transcription factor bHLH150 (BHLH150) of Arabidopsis thaliana (Mouse-ear cress).